The chain runs to 397 residues: Endoglucanase (397 aa).

Glu194 acts as the Proton donor in catalysis. The active-site Nucleophile is the Glu317.

This sequence belongs to the glycosyl hydrolase 5 (cellulase A) family.

The enzyme catalyses Endohydrolysis of (1-&gt;4)-beta-D-glucosidic linkages in cellulose, lichenin and cereal beta-D-glucans.. This chain is Endoglucanase, found in Paenibacillus polymyxa (Bacillus polymyxa).